We begin with the raw amino-acid sequence, 742 residues long: Zinc finger protein 280C (742 aa).

Glycyl lysine isopeptide (Lys-Gly) (interchain with G-Cter in SUMO2) cross-links involve residues Lys-10, Lys-23, Lys-42, Lys-65, Lys-85, Lys-123, and Lys-135. A compositionally biased stretch (polar residues) spans 138–168; sequence FTKTSPQEDSGACSVSQSDSTQDIPSSNILQ. The interval 138–243 is disordered; it reads FTKTSPQEDS…QSAPGSSSLR (106 aa). Glycyl lysine isopeptide (Lys-Gly) (interchain with G-Cter in SUMO2) cross-links involve residues Lys-180, Lys-186, and Lys-193. Over residues 182–191 the composition is skewed to polar residues; that stretch reads PSTSKVNSVN. Positions 200–222 are enriched in low complexity; that stretch reads SISETRPCSSSSSQTAPSGASSQ. Polar residues predominate over residues 223-243; the sequence is TVLSNVNTSSVQSAPGSSSLR. 5 consecutive C2H2-type zinc fingers follow at residues 323 to 345, 360 to 383, 390 to 413, 420 to 443, and 477 to 499; these read FKCF…MKHH, TTCQ…ESTH, TICK…KDTH, YICQ…RSSH, and YRCP…KLEH. The segment covering 523–578 has biased composition (low complexity); sequence LGSSQSRASSPPSSTIPSTSLQLSVPKSKSTTTKNNSKVSANKATTTSPQTVATTT. The segment at 523 to 608 is disordered; that stretch reads LGSSQSRASS…YKQKRQRTRK (86 aa). A compositionally biased stretch (polar residues) spans 579 to 592; that stretch reads GKPSASKPGTGTTK. Lys-580 participates in a covalent cross-link: Glycyl lysine isopeptide (Lys-Gly) (interchain with G-Cter in SUMO2). Positions 593 to 608 are enriched in basic residues; the sequence is SKAKPSYKQKRQRTRK.

It localises to the nucleus. May function as a transcription factor. This Mus musculus (Mouse) protein is Zinc finger protein 280C (Znf280c).